Here is a 559-residue protein sequence, read N- to C-terminus: Putative ankyrin repeat protein RBE_0902 (559 aa).

10 ANK repeats span residues 11–40, 46–75, 81–110, 158–189, 228–257, 263–292, 298–327, 333–364, 372–402, and 524–554; these read DGWT…EQAI, DGNT…DQAI, DGNT…TKQN, DDWT…VINH, NNDT…DQAI, YGNT…EQAI, QCDT…AINC, FGFT…EVII, and IDNN…WGLE.

The polypeptide is Putative ankyrin repeat protein RBE_0902 (Rickettsia bellii (strain RML369-C)).